The following is a 155-amino-acid chain: Crossover junction endodeoxyribonuclease RuvC (155 aa).

Active-site residues include aspartate 7, glutamate 68, and aspartate 140. Aspartate 7, glutamate 68, and aspartate 140 together coordinate Mg(2+).

This sequence belongs to the RuvC family. In terms of assembly, homodimer which binds Holliday junction (HJ) DNA. The HJ becomes 2-fold symmetrical on binding to RuvC with unstacked arms; it has a different conformation from HJ DNA in complex with RuvA. In the full resolvosome a probable DNA-RuvA(4)-RuvB(12)-RuvC(2) complex forms which resolves the HJ. Mg(2+) serves as cofactor.

Its subcellular location is the cytoplasm. It catalyses the reaction Endonucleolytic cleavage at a junction such as a reciprocal single-stranded crossover between two homologous DNA duplexes (Holliday junction).. In terms of biological role, the RuvA-RuvB-RuvC complex processes Holliday junction (HJ) DNA during genetic recombination and DNA repair. Endonuclease that resolves HJ intermediates. Cleaves cruciform DNA by making single-stranded nicks across the HJ at symmetrical positions within the homologous arms, yielding a 5'-phosphate and a 3'-hydroxyl group; requires a central core of homology in the junction. The consensus cleavage sequence is 5'-(A/T)TT(C/G)-3'. Cleavage occurs on the 3'-side of the TT dinucleotide at the point of strand exchange. HJ branch migration catalyzed by RuvA-RuvB allows RuvC to scan DNA until it finds its consensus sequence, where it cleaves and resolves the cruciform DNA. This is Crossover junction endodeoxyribonuclease RuvC from Prochlorococcus marinus (strain SARG / CCMP1375 / SS120).